The sequence spans 468 residues: UDP-N-acetylmuramate--L-alanine ligase (468 aa).

Position 121–127 (121–127 (GSHGKTT)) interacts with ATP.

This sequence belongs to the MurCDEF family.

It is found in the cytoplasm. The catalysed reaction is UDP-N-acetyl-alpha-D-muramate + L-alanine + ATP = UDP-N-acetyl-alpha-D-muramoyl-L-alanine + ADP + phosphate + H(+). Its pathway is cell wall biogenesis; peptidoglycan biosynthesis. In terms of biological role, cell wall formation. In Borreliella afzelii (strain PKo) (Borrelia afzelii), this protein is UDP-N-acetylmuramate--L-alanine ligase.